The primary structure comprises 509 residues: Ankyrin repeat domain-containing protein 13C (509 aa).

The segment covering 1–19 (MTGEKIRSLHRDQKPSKDE) has biased composition (basic and acidic residues). The interval 1 to 42 (MTGEKIRSLHRDQKPSKDEDLLEPDEEATAGGTFTRTGKLKN) is disordered. 3 ANK repeats span residues 79–110 (DAYFPVHECVFKGDIRRLSSLIRSHSIGQKDN), 111–140 (HGNTPLHLAVMLGNKECAHLLLAHNAPVKV), and 144–173 (QGWSPLAEAISYGDRQMITALLRKLKQQSR).

It is found in the endoplasmic reticulum membrane. In terms of biological role, acts as a molecular chaperone for G protein-coupled receptors, regulating their biogenesis and exit from the ER. This chain is Ankyrin repeat domain-containing protein 13C (ankrd13c), found in Xenopus tropicalis (Western clawed frog).